Here is a 625-residue protein sequence, read N- to C-terminus: tRNA uridine 5-carboxymethylaminomethyl modification enzyme MnmG (625 aa).

FAD contacts are provided by residues 13-18 (GGGHAG), Val-125, and Ser-182. 276-290 (GPRYCPSIEDKITRF) is a binding site for NAD(+). Gln-373 serves as a coordination point for FAD.

Belongs to the MnmG family. As to quaternary structure, homodimer. Heterotetramer of two MnmE and two MnmG subunits. It depends on FAD as a cofactor.

Its subcellular location is the cytoplasm. Functionally, NAD-binding protein involved in the addition of a carboxymethylaminomethyl (cmnm) group at the wobble position (U34) of certain tRNAs, forming tRNA-cmnm(5)s(2)U34. This Lactococcus lactis subsp. cremoris (strain MG1363) protein is tRNA uridine 5-carboxymethylaminomethyl modification enzyme MnmG.